A 66-amino-acid chain; its full sequence is Large ribosomal subunit protein bL33c (66 aa).

This sequence belongs to the bacterial ribosomal protein bL33 family.

It localises to the plastid. The protein localises to the chloroplast. The sequence is that of Large ribosomal subunit protein bL33c from Carica papaya (Papaya).